The chain runs to 72 residues: Large ribosomal subunit protein bL31 (72 aa).

The Zn(2+) site is built by C16, C18, C38, and C41.

This sequence belongs to the bacterial ribosomal protein bL31 family. Type A subfamily. Part of the 50S ribosomal subunit. Requires Zn(2+) as cofactor.

Binds the 23S rRNA. This is Large ribosomal subunit protein bL31 from Aliivibrio salmonicida (strain LFI1238) (Vibrio salmonicida (strain LFI1238)).